Here is a 343-residue protein sequence, read N- to C-terminus: F17c-G fimbrial adhesin (343 aa).

Residues 1–22 (MTNFYKVFLAVFILVCCNISHA) form the signal peptide. Positions 23–199 (AVSFIGSTEN…LNPFTLNDTV (177 aa)) are receptor-binding lectin domain. A carbohydrate-binding positions include 65-66 (AN), 110-111 (DT), and 138-141 (STQG). A disulfide bridge connects residues Cys-75 and Cys-132. The interval 200-343 (TSCRLLTPSA…GISTFTFSYQ (144 aa)) is fimbrillin-binding domain. Positions 287 to 307 (LKFGPDSPVKGNENQWQLSTG) are disordered. Residues 298 to 307 (NENQWQLSTG) are compositionally biased toward polar residues.

Belongs to the fimbrial protein family.

It is found in the fimbrium. Functionally, essential fimbrial adhesion factor that mediates binding to N-acetylglucosamine-containing receptors in the host intestinal microvilli, leading to colonization of the intestinal tissue, and diarrhea or septicemia. Also confers adhesiveness to laminin and basement membranes. In Escherichia coli, this protein is F17c-G fimbrial adhesin (f17cG).